We begin with the raw amino-acid sequence, 64 residues long: Large ribosomal subunit protein bL35 (64 aa).

Residues M1–R44 show a composition bias toward basic residues. A disordered region spans residues M1 to Q48.

Belongs to the bacterial ribosomal protein bL35 family.

This chain is Large ribosomal subunit protein bL35, found in Marinomonas sp. (strain MWYL1).